The following is a 179-amino-acid chain: MSKLPIVIAPDERLTTRASEVIDITDKIKELVNDMFETMYYAEGLGLAAVQVGVLKRIFIMDVQPEKAEDGPAGYESTGKFCMINPEITELSGEQVILKEGCLSIPEQSHEIKRPKYLTVKYKNLNNEEQTLKASGWLARCIQHELDHLNGILYVRHLSKLKYDMAMKKAQKVKRHYEQ.

Fe cation is bound by residues Cys-102 and His-144. The active site involves Glu-145. A Fe cation-binding site is contributed by His-148.

It belongs to the polypeptide deformylase family. Fe(2+) is required as a cofactor.

It carries out the reaction N-terminal N-formyl-L-methionyl-[peptide] + H2O = N-terminal L-methionyl-[peptide] + formate. Its function is as follows. Removes the formyl group from the N-terminal Met of newly synthesized proteins. Requires at least a dipeptide for an efficient rate of reaction. N-terminal L-methionine is a prerequisite for activity but the enzyme has broad specificity at other positions. This Wolbachia pipientis subsp. Culex pipiens (strain wPip) protein is Peptide deformylase.